Consider the following 155-residue polypeptide: Ribonuclease H (155 aa).

Residues 1 to 142 form the RNase H type-1 domain; it reads MLKQVEIFTD…CDELARAAAS (142 aa). Residues Asp10, Glu48, Asp70, and Asp134 each contribute to the Mg(2+) site.

The protein belongs to the RNase H family. In terms of assembly, monomer. It depends on Mg(2+) as a cofactor.

The protein resides in the cytoplasm. The enzyme catalyses Endonucleolytic cleavage to 5'-phosphomonoester.. Its function is as follows. Endonuclease that specifically degrades the RNA of RNA-DNA hybrids. The protein is Ribonuclease H of Klebsiella pneumoniae subsp. pneumoniae (strain ATCC 700721 / MGH 78578).